The chain runs to 348 residues: Probable dual-specificity RNA methyltransferase RlmN (348 aa).

Glu-93 acts as the Proton acceptor in catalysis. Residues 99–333 (TEKRLTACLS…VSLRKSRGLD (235 aa)) form the Radical SAM core domain. Cys-106 and Cys-338 form a disulfide bridge. Cys-113, Cys-117, and Cys-120 together coordinate [4Fe-4S] cluster. S-adenosyl-L-methionine is bound by residues 160–161 (GE), Ser-190, 219–221 (SLH), and Asn-295. The active-site S-methylcysteine intermediate is the Cys-338.

It belongs to the radical SAM superfamily. RlmN family. [4Fe-4S] cluster is required as a cofactor.

The protein resides in the cytoplasm. It catalyses the reaction adenosine(2503) in 23S rRNA + 2 reduced [2Fe-2S]-[ferredoxin] + 2 S-adenosyl-L-methionine = 2-methyladenosine(2503) in 23S rRNA + 5'-deoxyadenosine + L-methionine + 2 oxidized [2Fe-2S]-[ferredoxin] + S-adenosyl-L-homocysteine. The enzyme catalyses adenosine(37) in tRNA + 2 reduced [2Fe-2S]-[ferredoxin] + 2 S-adenosyl-L-methionine = 2-methyladenosine(37) in tRNA + 5'-deoxyadenosine + L-methionine + 2 oxidized [2Fe-2S]-[ferredoxin] + S-adenosyl-L-homocysteine. Functionally, specifically methylates position 2 of adenine 2503 in 23S rRNA and position 2 of adenine 37 in tRNAs. In Prochlorococcus marinus (strain MIT 9215), this protein is Probable dual-specificity RNA methyltransferase RlmN.